A 316-amino-acid chain; its full sequence is tRNA pseudouridine synthase B (316 aa).

The active-site Nucleophile is the Asp47.

It belongs to the pseudouridine synthase TruB family. Type 1 subfamily.

The enzyme catalyses uridine(55) in tRNA = pseudouridine(55) in tRNA. Its function is as follows. Responsible for synthesis of pseudouridine from uracil-55 in the psi GC loop of transfer RNAs. This is tRNA pseudouridine synthase B from Aliivibrio fischeri (strain ATCC 700601 / ES114) (Vibrio fischeri).